The primary structure comprises 234 residues: Cell polarity protein alp11 (234 aa).

The Ubiquitin-like domain maps to 4–88 (ITLFIKSSSA…IVVEDTRPPH (85 aa)). The region spanning 174 to 216 (VPEINNDNLWVGVEFDEPVGKNDGTVSGKRYFNAKNKHGSFLR) is the CAP-Gly domain. Serine 213 bears the Phosphoserine mark.

Belongs to the TBCB family. Binds to monomeric alpha-tubulin. Interacts with alp21.

It is found in the cytoplasm. It localises to the cytoskeleton. Functionally, required for microtubule function and cell polarity. Involved in the proper folding of alpha-tubulin. This is Cell polarity protein alp11 (alp11) from Schizosaccharomyces pombe (strain 972 / ATCC 24843) (Fission yeast).